A 266-amino-acid polypeptide reads, in one-letter code: MTEPLTETPELSAKYAWFFDLDGTLAEIKPHPDQVVVPDNILQGLQLLATASDGALALISGRSMVELDALAKPYRFPLAGVHGAERRDINGKTHIVHLPDAIARDISVQLHTVIAQYPGAELEAKGMAFALHYRQAPQHEDALMTLAQRITQIWPQMALQQGKCVVEIKPRGTSKGEAIAAFMQEAPFIGRTPVFLGDDLTDESGFAVVNRLGGMSVKIGTGATQASWRLAGVPDVWSWLEMITTALQQKRENNRSDDYESFSRSI.

The active-site Nucleophile is Asp-20. Mg(2+)-binding residues include Asp-20, Asp-22, and Asp-198. 20 to 22 provides a ligand contact to substrate; the sequence is DLD.

Belongs to the trehalose phosphatase family. Requires Mg(2+) as cofactor. It depends on Mn(2+) as a cofactor. Co(2+) is required as a cofactor. Zn(2+) serves as cofactor.

The enzyme catalyses alpha,alpha-trehalose 6-phosphate + H2O = alpha,alpha-trehalose + phosphate. It participates in glycan biosynthesis; trehalose biosynthesis. In terms of biological role, removes the phosphate from trehalose 6-phosphate (Tre6P) to produce free trehalose. Also catalyzes the dephosphorylation of glucose-6-phosphate (Glu6P) and 2-deoxyglucose-6-phosphate (2dGlu6P). The polypeptide is Trehalose-6-phosphate phosphatase (otsB) (Escherichia coli (strain K12)).